The sequence spans 88 residues: HssA/B-like protein 19 (88 aa).

It belongs to the hssA/B family.

This chain is HssA/B-like protein 19 (hssl19), found in Dictyostelium discoideum (Social amoeba).